The following is a 233-amino-acid chain: Putative N-acetylmannosamine-6-phosphate 2-epimerase (233 aa).

The protein belongs to the NanE family.

It catalyses the reaction an N-acyl-D-glucosamine 6-phosphate = an N-acyl-D-mannosamine 6-phosphate. The protein operates within amino-sugar metabolism; N-acetylneuraminate degradation; D-fructose 6-phosphate from N-acetylneuraminate: step 3/5. Converts N-acetylmannosamine-6-phosphate (ManNAc-6-P) to N-acetylglucosamine-6-phosphate (GlcNAc-6-P). The protein is Putative N-acetylmannosamine-6-phosphate 2-epimerase of Yersinia pestis bv. Antiqua (strain Antiqua).